Reading from the N-terminus, the 378-residue chain is 1-acyl-sn-glycerol-3-phosphate acyltransferase delta (378 aa).

The helical transmembrane segment at 11-31 (FLCHLVFCYVFIASGLIINTV) threads the bilayer. Positions 96–101 (HKFEID) match the HXXXXD motif motif. Transmembrane regions (helical) follow at residues 125–145 (ELAY…VFCS), 307–327 (TLVN…QFLV), and 338–358 (LASF…MIGV).

The protein belongs to the 1-acyl-sn-glycerol-3-phosphate acyltransferase family.

The protein resides in the endoplasmic reticulum membrane. It catalyses the reaction a 1-acyl-sn-glycero-3-phosphate + an acyl-CoA = a 1,2-diacyl-sn-glycero-3-phosphate + CoA. The enzyme catalyses (4Z,7Z,10Z,13Z,16Z,19Z)-docosahexaenoyl-CoA + 1-hexadecanoyl-sn-glycero-3-phosphate = 1-hexadecanoyl-2-(4Z,7Z,10Z,13Z,16Z,19Z-docosahexaenoyl)-sn-glycero-3-phosphate + CoA. The catalysed reaction is 1-octadecanoyl-sn-glycero-3-phosphate + (9Z,12Z)-octadecadienoyl-CoA = 1-octadecanoyl-2-(9Z,12Z-octadecadienoyl)-sn-glycero-3-phosphate + CoA. It carries out the reaction 1-octadecanoyl-sn-glycero-3-phosphate + (4Z,7Z,10Z,13Z,16Z,19Z)-docosahexaenoyl-CoA = 1-octadecanoyl-2-(4Z,7Z,10Z,13Z,16Z,19Z-docosahexaenoyl)-sn-glycero-3-phosphate + CoA. It catalyses the reaction (4Z,7Z,10Z,13Z,16Z,19Z)-docosahexaenoyl-CoA + 1-(9Z-octadecenoyl)-sn-glycero-3-phosphate = 1-(9Z-octadecenoyl)-2-(4Z,7Z,10Z,13Z,16Z,19Z-docosahexaenoyl)-sn-glycero-3-phosphate + CoA. It participates in phospholipid metabolism; CDP-diacylglycerol biosynthesis; CDP-diacylglycerol from sn-glycerol 3-phosphate: step 2/3. Functionally, converts 1-acyl-sn-glycerol-3-phosphate (lysophosphatidic acid or LPA) into 1,2-diacyl-sn-glycerol-3-phosphate (phosphatidic acid or PA) by incorporating an acyl moiety at the sn-2 position of the glycerol backbone. Exhibits high acyl-CoA specificity for polyunsaturated fatty acyl-CoA, especially docosahexaenoyl-CoA (22:6-CoA, DHA-CoA). The chain is 1-acyl-sn-glycerol-3-phosphate acyltransferase delta (AGPAT4) from Macaca fascicularis (Crab-eating macaque).